Consider the following 141-residue polypeptide: Putative antiporter subunit mnhB2 (141 aa).

Helical transmembrane passes span 10 to 30, 35 to 55, 70 to 90, and 116 to 136; these read SVTKIVVFILLTFGFYVFFAG, GGGFIGGLIFSSAFILMFLAF, KLMIIGSLISVATASVPMFFG, and LFELGILLTVVGVIVTVMLSI.

It belongs to the CPA3 antiporters (TC 2.A.63) subunit B family. As to quaternary structure, may form a heterooligomeric complex that consists of seven subunits: mnhA2, mnhB2, mnhC2, mnhD2, mnhE2, mnhF2 and mnhG2.

It localises to the cell membrane. This chain is Putative antiporter subunit mnhB2 (mnhB2), found in Staphylococcus epidermidis (strain ATCC 35984 / DSM 28319 / BCRC 17069 / CCUG 31568 / BM 3577 / RP62A).